The sequence spans 616 residues: Probable methyltransferase PMT2 (616 aa).

At 1-13 the chain is on the cytoplasmic side; the sequence is MALKSSSADGKTR. A helical; Signal-anchor for type II membrane protein membrane pass occupies residues 14–34; that stretch reads SSVQIFIVFSLCCFFYILGAW. Topologically, residues 35–616 are lumenal; the sequence is QRSGFGKGDS…YWVTNSTSTH (582 aa). Asparagine 205 and asparagine 611 each carry an N-linked (GlcNAc...) asparagine glycan.

Belongs to the methyltransferase superfamily.

The protein resides in the golgi apparatus membrane. The sequence is that of Probable methyltransferase PMT2 from Arabidopsis thaliana (Mouse-ear cress).